Consider the following 143-residue polypeptide: MALQRTLSIIKPDAVSKNVIGEILTRFEKAGLRVVAAKMVQLSEREAGGFYAEHKERPFFKDLVSFMTSGPVVVQVLEGEDAIAKNRELMGATDPKKADAGTIRADFAVSIDENAVHGSDSEASAAREIAYFFAATEVCERIR.

The ATP site is built by Lys-11, Phe-59, Arg-87, Thr-93, Arg-104, and Asn-114. The Pros-phosphohistidine intermediate role is filled by His-117.

This sequence belongs to the NDK family. As to quaternary structure, homotetramer. Mg(2+) serves as cofactor.

It localises to the cytoplasm. It catalyses the reaction a 2'-deoxyribonucleoside 5'-diphosphate + ATP = a 2'-deoxyribonucleoside 5'-triphosphate + ADP. The catalysed reaction is a ribonucleoside 5'-diphosphate + ATP = a ribonucleoside 5'-triphosphate + ADP. Functionally, major role in the synthesis of nucleoside triphosphates other than ATP. The ATP gamma phosphate is transferred to the NDP beta phosphate via a ping-pong mechanism, using a phosphorylated active-site intermediate. The sequence is that of Nucleoside diphosphate kinase from Pseudomonas aeruginosa (strain UCBPP-PA14).